The chain runs to 245 residues: Ribonuclease 3 (245 aa).

The region spanning Tyr-24–Gly-146 is the RNase III domain. Glu-59 is a binding site for Mg(2+). The active site involves Asp-63. Mg(2+) is bound by residues Asn-132 and Glu-135. Glu-135 is an active-site residue. The DRBM domain maps to Asp-173–Val-243.

The protein belongs to the ribonuclease III family. In terms of assembly, homodimer. Mg(2+) is required as a cofactor.

It is found in the cytoplasm. The enzyme catalyses Endonucleolytic cleavage to 5'-phosphomonoester.. In terms of biological role, digests double-stranded RNA. Involved in the processing of primary rRNA transcript to yield the immediate precursors to the large and small rRNAs (23S and 16S). Processes some mRNAs, and tRNAs when they are encoded in the rRNA operon. Processes pre-crRNA and tracrRNA of type II CRISPR loci if present in the organism. This Nitrosomonas europaea (strain ATCC 19718 / CIP 103999 / KCTC 2705 / NBRC 14298) protein is Ribonuclease 3.